The chain runs to 374 residues: Alanine racemase (374 aa).

Residue Lys34 is the Proton acceptor; specific for D-alanine of the active site. Position 34 is an N6-(pyridoxal phosphate)lysine (Lys34). Position 147 (Arg147) interacts with substrate. Residue Tyr271 is the Proton acceptor; specific for L-alanine of the active site. Residue Met319 participates in substrate binding.

It belongs to the alanine racemase family. Pyridoxal 5'-phosphate is required as a cofactor.

The enzyme catalyses L-alanine = D-alanine. It participates in amino-acid biosynthesis; D-alanine biosynthesis; D-alanine from L-alanine: step 1/1. In terms of biological role, catalyzes the interconversion of L-alanine and D-alanine. May also act on other amino acids. This Haemophilus ducreyi (strain 35000HP / ATCC 700724) protein is Alanine racemase (alr).